The chain runs to 91 residues: Methanol dehydrogenase [cytochrome c] subunit 2 (91 aa).

The signal sequence occupies residues 1-22; it reads MKHVLTLLALASVFAVSNQALA. Cysteines 28 and 34 form a disulfide.

The protein belongs to the methanol dehydrogenase subunit 2 family. As to quaternary structure, heterotetramer composed of 2 alpha and 2 beta subunits.

It is found in the cell inner membrane. The catalysed reaction is 2 Fe(III)-[cytochrome cL] + a primary alcohol = 2 Fe(II)-[cytochrome cL] + an aldehyde + 2 H(+). Its function is as follows. Catalyzes the oxidation of primary alcohols including methanol. This is Methanol dehydrogenase [cytochrome c] subunit 2 (moxI) from Methylophilus methylotrophus (Bacterium W3A1).